A 380-amino-acid polypeptide reads, in one-letter code: Putative S-(hydroxymethyl)glutathione dehydrogenase 2 (380 aa).

Cys-50 contributes to the Zn(2+) binding site. Residue His-51 participates in NAD(+) binding. Residues His-72, Glu-73, Cys-102, Cys-105, Cys-108, Cys-116, and Cys-179 each coordinate Zn(2+). Residues 204–209 (GLGSVG), Asp-228, and 297–299 (IGV) contribute to the NAD(+) site.

Belongs to the zinc-containing alcohol dehydrogenase family. Class-III subfamily. Requires Zn(2+) as cofactor.

The enzyme catalyses a primary alcohol + NAD(+) = an aldehyde + NADH + H(+). It catalyses the reaction a secondary alcohol + NAD(+) = a ketone + NADH + H(+). The catalysed reaction is S-(hydroxymethyl)glutathione + NADP(+) = S-formylglutathione + NADPH + H(+). It carries out the reaction S-(hydroxymethyl)glutathione + NAD(+) = S-formylglutathione + NADH + H(+). The enzyme catalyses S-nitrosoglutathione + NADH + H(+) = S-(hydroxysulfenamide)glutathione + NAD(+). Oxidizes long-chain alcohols and, in the presence of glutathione, is able to oxidize formaldehyde. Also acts as a S-nitroso-glutathione reductase by catalyzing the NADH-dependent reduction of S-nitrosoglutathione, thereby regulating protein S-nitrosylation. The chain is Putative S-(hydroxymethyl)glutathione dehydrogenase 2 from Schizosaccharomyces pombe (strain 972 / ATCC 24843) (Fission yeast).